The primary structure comprises 232 residues: Clarin-1 (232 aa).

A helical membrane pass occupies residues 8–28; the sequence is IIFCMAGVFSFACALGVVTAL. N48 is a glycosylation site (N-linked (GlcNAc...) asparagine). 3 helical membrane-spanning segments follow: residues 101–121, 135–155, and 186–206; these read VILFSAILIVLTMVGTAFFMY, LGLYLLSFISGSCGCLVMILF, and TTSFWVIFFCFFVHFLNGLLI.

The protein belongs to the clarin family. As to expression, widely expressed. Found in the retina.

It is found in the cell membrane. Functionally, may have a role in the excitatory ribbon synapse junctions between hair cells and cochlear ganglion cells and presumably also in analogous synapses within the retina. The polypeptide is Clarin-1 (CLRN1) (Homo sapiens (Human)).